Reading from the N-terminus, the 690-residue chain is Putative glycerophosphocholine phosphodiesterase GPCPD1 homolog 1 (690 aa).

One can recognise a CBM20 domain in the interval 1 to 122; sequence MDQDYKAHFK…RKNITDQFGS (122 aa). Residues 344 to 654 enclose the GP-PDE domain; it reads MLQIGHRGMG…DRIGEDEVLK (311 aa). The disordered stretch occupies residues 670–690; sequence ARSQHNSRSPSMSRRCMSTVE. The segment covering 676–690 has biased composition (low complexity); the sequence is SRSPSMSRRCMSTVE.

It belongs to the glycerophosphoryl diester phosphodiesterase family.

This Caenorhabditis elegans protein is Putative glycerophosphocholine phosphodiesterase GPCPD1 homolog 1.